The sequence spans 620 residues: 1-deoxy-D-xylulose-5-phosphate synthase (620 aa).

Thiamine diphosphate is bound by residues H80 and 121–123 (GHS). D152 is a binding site for Mg(2+). Thiamine diphosphate-binding positions include 153–154 (GA), N181, Y288, and E370. Position 181 (N181) interacts with Mg(2+).

Belongs to the transketolase family. DXPS subfamily. Homodimer. Mg(2+) serves as cofactor. Requires thiamine diphosphate as cofactor.

It catalyses the reaction D-glyceraldehyde 3-phosphate + pyruvate + H(+) = 1-deoxy-D-xylulose 5-phosphate + CO2. It participates in metabolic intermediate biosynthesis; 1-deoxy-D-xylulose 5-phosphate biosynthesis; 1-deoxy-D-xylulose 5-phosphate from D-glyceraldehyde 3-phosphate and pyruvate: step 1/1. Functionally, catalyzes the acyloin condensation reaction between C atoms 2 and 3 of pyruvate and glyceraldehyde 3-phosphate to yield 1-deoxy-D-xylulose-5-phosphate (DXP). The protein is 1-deoxy-D-xylulose-5-phosphate synthase of Salmonella choleraesuis (strain SC-B67).